A 285-amino-acid chain; its full sequence is 2-methoxy-6-polyprenyl-1,4-benzoquinol methylase, mitochondrial (285 aa).

A mitochondrion-targeting transit peptide spans 1–30 (MKGATNLFKSMRKPTNVGNFRQFSVNQVNS). S-adenosyl-L-methionine-binding positions include Thr-106, Asp-126, 156-157 (NA), and Ser-173.

Belongs to the class I-like SAM-binding methyltransferase superfamily. MenG/UbiE family. As to quaternary structure, component of a multi-subunit COQ enzyme complex.

The protein localises to the mitochondrion inner membrane. It catalyses the reaction a 2-methoxy-6-(all-trans-polyprenyl)benzene-1,4-diol + S-adenosyl-L-methionine = a 5-methoxy-2-methyl-3-(all-trans-polyprenyl)benzene-1,4-diol + S-adenosyl-L-homocysteine + H(+). It participates in cofactor biosynthesis; ubiquinone biosynthesis. Methyltransferase required for the conversion of 2-polyprenyl-6-methoxy-1,4-benzoquinol (DDMQH2) to 2-polyprenyl-3-methyl-6-methoxy-1,4-benzoquinol (DMQH2). This is 2-methoxy-6-polyprenyl-1,4-benzoquinol methylase, mitochondrial from Caenorhabditis elegans.